The following is an 804-amino-acid chain: Leucine--tRNA ligase (804 aa).

The 'HIGH' region signature appears at 39–50 (PFPSGKGLHVGH). Residues 573–577 (KMSKS) carry the 'KMSKS' region motif. K576 contacts ATP.

Belongs to the class-I aminoacyl-tRNA synthetase family.

It localises to the cytoplasm. It carries out the reaction tRNA(Leu) + L-leucine + ATP = L-leucyl-tRNA(Leu) + AMP + diphosphate. The protein is Leucine--tRNA ligase of Lactobacillus helveticus (strain DPC 4571).